Here is a 313-residue protein sequence, read N- to C-terminus: Porphobilinogen deaminase (313 aa).

At Cys242 the chain carries S-(dipyrrolylmethanemethyl)cysteine.

Belongs to the HMBS family. Monomer. It depends on dipyrromethane as a cofactor.

It carries out the reaction 4 porphobilinogen + H2O = hydroxymethylbilane + 4 NH4(+). It functions in the pathway porphyrin-containing compound metabolism; protoporphyrin-IX biosynthesis; coproporphyrinogen-III from 5-aminolevulinate: step 2/4. In terms of biological role, tetrapolymerization of the monopyrrole PBG into the hydroxymethylbilane pre-uroporphyrinogen in several discrete steps. The sequence is that of Porphobilinogen deaminase from Yersinia pseudotuberculosis serotype IB (strain PB1/+).